The following is a 275-amino-acid chain: Peptidoglycan-N-acetylglucosamine deacetylase BC_1960 (275 aa).

The NodB homology domain occupies 81–262 (AEVALTFDDG…QLKTKGARFV (182 aa)). The Proton acceptor role is filled by Asp-88. The Zn(2+) site is built by Asp-89, His-139, and His-143. Pro-179 bears the 2-hydroxyproline; partial mark. His-233 functions as the Proton donor in the catalytic mechanism.

Belongs to the polysaccharide deacetylase family. The cofactor is Zn(2+). Post-translationally, hydroxylated on Pro-179. Hydroxylation alters the active site and enhances significantly deacetylase activity, probably by creating a more favorable environment for transition-state stabilization. It might be autocatalytic.

It carries out the reaction peptidoglycan-N-acetyl-D-glucosamine + H2O = peptidoglycan-D-glucosamine + acetate.. With respect to regulation, deacetylase activity is stimulated by hydroxylation on Pro-179. Inhibited by CuCl(2) and ZnCl(2). Inhibited by the hydroxamate N-hydroxy-4-(naphthalene-1-yl)benzamide (NHNB). In terms of biological role, catalyzes the deacetylation of N-acetylglucosamine (GlcNAc) residues in peptidoglycan. Also acts on soluble chitin substrates and N-acetylchitooligomers. Acts on cell wall peptidoglycan from the Gram-positive bacteria B.cereus and B.subtilis and the Gram-negative bacterium H.pylori. Not active on acetylated xylan. This is Peptidoglycan-N-acetylglucosamine deacetylase BC_1960 from Bacillus cereus (strain ATCC 14579 / DSM 31 / CCUG 7414 / JCM 2152 / NBRC 15305 / NCIMB 9373 / NCTC 2599 / NRRL B-3711).